Consider the following 230-residue polypeptide: ATP synthase subunit a (230 aa).

Helical transmembrane passes span 17–37 (LPIT…FIMA), 78–98 (IFPF…IGVI), 107–127 (DLSV…WFGI), 165–187 (LFGN…GFLV), and 198–218 (EAII…AGGI).

It belongs to the ATPase A chain family. As to quaternary structure, F-type ATPases have 2 components, CF(1) - the catalytic core - and CF(0) - the membrane proton channel. CF(1) has five subunits: alpha(3), beta(3), gamma(1), delta(1), epsilon(1). CF(0) has three main subunits: a(1), b(2) and c(9-12). The alpha and beta chains form an alternating ring which encloses part of the gamma chain. CF(1) is attached to CF(0) by a central stalk formed by the gamma and epsilon chains, while a peripheral stalk is formed by the delta and b chains.

The protein resides in the cell inner membrane. Functionally, key component of the proton channel; it plays a direct role in the translocation of protons across the membrane. The chain is ATP synthase subunit a from Legionella pneumophila (strain Paris).